A 205-amino-acid polypeptide reads, in one-letter code: MSKRETTKYKIDRRMGENIWGRPKSPVNRRDYGPGQHGQRRKGKLSDYGVQLRAKQKLKGFYGDISEKQFHKTYVEAARRRGDTGENLIGLLESRLDAVVYRAKFVPTIFASRQFINHGHVNVNGRRTNIQSYRCKPGDVIEVREKSKQLVLVLESVQLAERDVPDYIEADHKQMKATFTRIPAFADVPYAVQMEPNLVVEFYSR.

A compositionally biased stretch (basic and acidic residues) spans 1 to 16 (MSKRETTKYKIDRRMG). Positions 1–46 (MSKRETTKYKIDRRMGENIWGRPKSPVNRRDYGPGQHGQRRKGKLS) are disordered. Residues 94-157 (SRLDAVVYRA…KQLVLVLESV (64 aa)) form the S4 RNA-binding domain.

This sequence belongs to the universal ribosomal protein uS4 family. As to quaternary structure, part of the 30S ribosomal subunit. Contacts protein S5. The interaction surface between S4 and S5 is involved in control of translational fidelity.

Functionally, one of the primary rRNA binding proteins, it binds directly to 16S rRNA where it nucleates assembly of the body of the 30S subunit. Its function is as follows. With S5 and S12 plays an important role in translational accuracy. In Bartonella tribocorum (strain CIP 105476 / IBS 506), this protein is Small ribosomal subunit protein uS4.